The chain runs to 89 residues: Small ribosomal subunit protein uS15 (89 aa).

The protein belongs to the universal ribosomal protein uS15 family. Part of the 30S ribosomal subunit. Forms a bridge to the 50S subunit in the 70S ribosome, contacting the 23S rRNA.

Its function is as follows. One of the primary rRNA binding proteins, it binds directly to 16S rRNA where it helps nucleate assembly of the platform of the 30S subunit by binding and bridging several RNA helices of the 16S rRNA. Forms an intersubunit bridge (bridge B4) with the 23S rRNA of the 50S subunit in the ribosome. The chain is Small ribosomal subunit protein uS15 from Streptococcus pneumoniae (strain P1031).